Reading from the N-terminus, the 143-residue chain is Nitrosuccinic acid decarboxylase npaB (143 aa).

The protein belongs to the carboxymuconolactone decarboxylase family. Requires Mg(2+) as cofactor.

The protein operates within mycotoxin biosynthesis. Functionally, nitrosuccinic acid decarboxylase; part of the gene cluster that mediates the biosynthesis of the deadly neurotoxic nitroalkane 3-nitropropanoic acid (3-NPA) that acts as an antimetabolite of succinate and irreversibly inhibits succinate dehydrogenase and disrupts mitochondrial oxidative phosphorylation. NpaB facilitates decarboxylation of nitrosuccinic acid produced by the nitrosuccinic acid synthase npaA to yield the final product of the cluster, the lethal mycotoxin 3-NPA. This chain is Nitrosuccinic acid decarboxylase npaB, found in Metarhizium robertsii (strain ARSEF 23 / ATCC MYA-3075) (Metarhizium anisopliae (strain ARSEF 23)).